Here is a 1030-residue protein sequence, read N- to C-terminus: Tricorn protease (1030 aa).

The tract at residues 1–270 is six-bladed beta propeller; it reads MANLLQNPDI…DNVKSLDIGP (270 aa). The tract at residues 93-94 is binds the substrate's C-terminus; the sequence is RR. Residues 286-635 form a seven-bladed beta propeller region; it reads LEDFSMSPGD…EEEKSLNIDA (350 aa). A C-1 region spans residues 641-712; sequence NVKEDFAEMY…RTSHSYEMGG (72 aa). His-706 functions as the Charge relay system in the catalytic mechanism. Positions 721 to 816 are PDZ-like; it reads RAGRIACDFK…SGFVDVLQDD (96 aa). The C-2 stretch occupies residues 817–1022; that stretch reads RYIRYRAWVE…IEMVLADLEK (206 aa). 877–879 is a binding site for substrate; sequence GGG. The active-site Nucleophile is Ser-926. 954 to 956 contributes to the substrate binding site; that stretch reads GIS. The Charge relay system role is filled by Glu-984.

The protein belongs to the peptidase S41B family. In terms of assembly, part of the tricorn proteolytic complex.

It is found in the cytoplasm. Functionally, tricorn degrades oligopeptides in a sequential manner. In Thermoplasma volcanium (strain ATCC 51530 / DSM 4299 / JCM 9571 / NBRC 15438 / GSS1), this protein is Tricorn protease (tri).